The chain runs to 315 residues: FQVCHSLGGGTGSGMGTLLISKIREEYPDRMMLTFSVFPSPKVSDTVVEPYNATLSVHQLVENADVCMVLDNEALYDICFRTLKLTTPSFGDLNHLISATMSGVTCSLRFPGQLNSDLRKLAVILIPFPRLHFFMVGFAPLTSRGSQQYRSLSVPELTQQMWDSKNMMCAADPRHGRYLTASAMFREKMSTKDLDEQMINVQNKNSSYFVEWIPNNVKSTVCDIPPTGLKMASTFIGNSTSIQEMFRRVSEQFTAMFRRKAFLHWYTGEGMDEMEFTEAESNMNDLVSEYQQYQDATADEEEYYEDEEEEEAQGM.

Residues serine 6, glycine 10, threonine 11, glycine 12, asparagine 72, and asparagine 94 each coordinate GTP. A disordered region spans residues 295 to 315 (DATADEEEYYEDEEEEEAQGM). Positions 297 to 315 (TADEEEYYEDEEEEEAQGM) are enriched in acidic residues.

This sequence belongs to the tubulin family. Dimer of alpha and beta chains. A typical microtubule is a hollow water-filled tube with an outer diameter of 25 nm and an inner diameter of 15 nM. Alpha-beta heterodimers associate head-to-tail to form protofilaments running lengthwise along the microtubule wall with the beta-tubulin subunit facing the microtubule plus end conferring a structural polarity. Microtubules usually have 13 protofilaments but different protofilament numbers can be found in some organisms and specialized cells. The cofactor is Mg(2+).

It localises to the cytoplasm. The protein resides in the cytoskeleton. Functionally, tubulin is the major constituent of microtubules, a cylinder consisting of laterally associated linear protofilaments composed of alpha- and beta-tubulin heterodimers. Microtubules grow by the addition of GTP-tubulin dimers to the microtubule end, where a stabilizing cap forms. Below the cap, tubulin dimers are in GDP-bound state, owing to GTPase activity of alpha-tubulin. This is Tubulin beta-1 chain (TUBB1) from Daucus carota (Wild carrot).